Here is a 490-residue protein sequence, read N- to C-terminus: Myocilin (490 aa).

The first 18 residues, 1-18 (MPATQLLLLACLVWGLGA), serve as a signal peptide directing secretion. An N-linked (GlcNAc...) asparagine glycan is attached at N43. Residues 52 to 169 (QAMSAIQDLQ…SQEVARLRRG (118 aa)) are a coiled coil. Residues 146 to 157 (REENEDLARRLD) are compositionally biased toward basic and acidic residues. The interval 146–188 (REENEDLARRLDSSSQEVARLRRGQCPQARGTPQDVPSGSREV) is disordered. Positions 230-489 (GCGELVWVGE…MVTYDLRLSE (260 aa)) constitute an Olfactomedin-like domain. An intrachain disulfide couples C231 to C419. 5 residues coordinate Ca(2+): D366, N414, A415, V463, and D464. Positions 488–490 (SEM) match the Microbody targeting signal motif.

In terms of assembly, homodimer (via N-terminus). Can also form higher oligomers. Interacts with OLFM3, FN1, NRCAM, GLDN and NFASC. Interacts (via N-terminus) with MYL2. Interacts with SFRP1, FRZB, FZD7, FZD10, FZD1 and WIF1; regulates Wnt signaling. Interacts with SNTA1; regulates muscle hypertrophy. Interacts with ERBB2 and ERBB3; activates ERBB2-ERBB3 signaling pathway. Interacts with SNCG; affects its secretion and its aggregation. Palmitoylated. In terms of processing, undergoes a calcium-dependent proteolytic cleavage at Arg-212 by CAPN2 in the endoplasmic reticulum. The result is the production of two fragments, one of 35 kDa containing the C-terminal olfactomedin-like domain, and another of 20 kDa containing the N-terminal leucine zipper-like domain. Post-translationally, glycosylated. Expressed in optic nerve head, ciliary body and retina.

It localises to the secreted. Its subcellular location is the golgi apparatus. It is found in the cytoplasmic vesicle. The protein localises to the extracellular space. The protein resides in the extracellular matrix. It localises to the extracellular exosome. Its subcellular location is the mitochondrion. It is found in the mitochondrion intermembrane space. The protein localises to the mitochondrion inner membrane. The protein resides in the mitochondrion outer membrane. It localises to the rough endoplasmic reticulum. Its subcellular location is the cell projection. It is found in the cilium. The protein localises to the endoplasmic reticulum. Secreted glycoprotein regulating the activation of different signaling pathways in adjacent cells to control different processes including cell adhesion, cell-matrix adhesion, cytoskeleton organization and cell migration. Promotes substrate adhesion, spreading and formation of focal contacts. Negatively regulates cell-matrix adhesion and stress fiber assembly through Rho protein signal transduction. Modulates the organization of actin cytoskeleton by stimulating the formation of stress fibers through interactions with components of Wnt signaling pathways. Promotes cell migration through activation of PTK2 and the downstream phosphatidylinositol 3-kinase signaling. Plays a role in bone formation and promotes osteoblast differentiation in a dose-dependent manner through mitogen-activated protein kinase signaling. Mediates myelination in the peripheral nervous system through ERBB2/ERBB3 signaling. Plays a role as a regulator of muscle hypertrophy through the components of dystrophin-associated protein complex. Involved in positive regulation of mitochondrial depolarization. Plays a role in neurite outgrowth. May participate in the obstruction of fluid outflow in the trabecular meshwork. The polypeptide is Myocilin (MYOC) (Felis catus (Cat)).